Consider the following 438-residue polypeptide: uncharacterized protein (438 aa).

Disordered regions lie at residues Met-1 to Pro-22 and Asp-156 to Pro-264. Positions Asp-156 to Lys-170 are enriched in basic and acidic residues. Over residues Ser-171–Ser-189 the composition is skewed to low complexity. The segment covering Thr-191–Ser-206 has biased composition (basic and acidic residues).

The protein belongs to the adhesin P1 family.

This is an uncharacterized protein from Mycoplasma pneumoniae (strain ATCC 29342 / M129 / Subtype 1) (Mycoplasmoides pneumoniae).